Reading from the N-terminus, the 931-residue chain is Adhesion G protein-coupled receptor E1 (931 aa).

Residues 1–27 form the signal peptide; sequence MWGFWLLLFWGFSGMYRWGMTTLPTLG. The Extracellular portion of the chain corresponds to 28–644; it reads QTLGGVNECQ…IMASGELTME (617 aa). 2 EGF-like domains span residues 32-80 and 81-132; these read GVNE…VECQ and DVNE…FLCA. 21 cysteine pairs are disulfide-bonded: Cys-36/Cys-48, Cys-42/Cys-57, Cys-59/Cys-79, Cys-85/Cys-98, Cys-92/Cys-107, Cys-109/Cys-131, Cys-137/Cys-149, Cys-143/Cys-158, Cys-160/Cys-171, Cys-177/Cys-189, Cys-183/Cys-198, Cys-200/Cys-220, Cys-226/Cys-239, Cys-233/Cys-248, Cys-250/Cys-270, Cys-276/Cys-286, Cys-280/Cys-295, Cys-297/Cys-317, Cys-323/Cys-336, Cys-330/Cys-345, and Cys-347/Cys-366. In terms of domain architecture, EGF-like 3; calcium-binding spans 133-172; it reads DVDECLTIGICPKYSNCSNSVGSYSCTCQPGFVLNGSICE. 2 N-linked (GlcNAc...) asparagine glycosylation sites follow: Asn-148 and Asn-167. The EGF-like 4; calcium-binding domain occupies 173–221; it reads DEDECVTRDVCPEHATCHNTLGSYYCTCNSGLESSGGGPMFQGLDESCE. The EGF-like 5; calcium-binding domain maps to 222 to 271; the sequence is DVDECSRNSTLCGPTFICINTLGSYSCSCPAGFSLPTFQILGHPADGNCT. Asn-229 carries an N-linked (GlcNAc...) asparagine glycan. 2 N-linked (GlcNAc...) asparagine glycosylation sites follow: Asn-269 and Asn-283. An EGF-like 6; calcium-binding domain is found at 272–318; sequence DIDECDDTCPLNSSCTNTIGSYFCTCHPGFASSNGQLNFKDLEVTCE. Positions 319-367 constitute an EGF-like 7; calcium-binding domain; that stretch reads DIDECTQDPLQCGLNSVCTNVPGSYICGCLPDFQMDPEGSQGYGNFNCK. 4 N-linked (GlcNAc...) asparagine glycosylation sites follow: Asn-405, Asn-417, Asn-474, and Asn-498. The region spanning 482–642 is the GAIN-B domain; it reads EYLDIESKVI…AIIMASGELT (161 aa). The short motif at 506 to 508 is the Cell attachment site element; that stretch reads RGD. Disulfide bonds link Cys-595/Cys-624 and Cys-612/Cys-626. A GPS region spans residues 595 to 642; the sequence is CVSWNTDVEDGRWTPSGCEIVEASETHTVCSCNRMANLAIIMASGELT. Residues 645-672 form a helical membrane-spanning segment; the sequence is FSLYIISHVGTVISLVCLALAIATFLLC. Topologically, residues 673-679 are cytoplasmic; it reads RAVQNHN. A helical transmembrane segment spans residues 680–701; sequence TYMHLHLCVCLFLAKILFLTGI. Over 702-711 the chain is Extracellular; it reads DKTDNQTACA. A glycan (N-linked (GlcNAc...) asparagine) is linked at Asn-706. Residues 712–735 traverse the membrane as a helical segment; that stretch reads IIAGFLHYLFLACFFWMLVEAVML. Residues 736–754 are Cytoplasmic-facing; it reads FLMVRNLKVVNYFSSRNIK. The chain crosses the membrane as a helical span at residues 755–776; that stretch reads MLHLCAFGYGLPVLVVIISASV. At 777–792 the chain is on the extracellular side; that stretch reads QPRGYGMHNRCWLNTE. The chain crosses the membrane as a helical span at residues 793–821; the sequence is TGFIWSFLGPVCMIITINSVLLAWTLWVL. The Cytoplasmic portion of the chain corresponds to 822-839; that stretch reads RQKLCSVSSEVSKLKDTR. The chain crosses the membrane as a helical span at residues 840 to 859; it reads LLTFKAIAQIFILGCSWVLG. Residues 860 to 874 lie on the Extracellular side of the membrane; the sequence is IFQIGPLASIMAYLF. A helical transmembrane segment spans residues 875–897; that stretch reads TIINSLQGAFIFLIHCLLNRQVR. Residues 898-931 are Cytoplasmic-facing; the sequence is DEYKKLLTRKTDLSSHSQTSGILLSSMPSTSKMG.

Belongs to the G-protein coupled receptor 2 family. Adhesion G-protein coupled receptor (ADGR) subfamily. In macrophages; but absent from those which are localized within T-cell areas of lymph nodes and spleen. Low level of expression on blood monocytes.

The protein resides in the cell membrane. In terms of biological role, orphan receptor involved in cell adhesion and probably in cell-cell interactions specifically involving cells of the immune system. May play a role in regulatory T-cells (Treg) development. The sequence is that of Adhesion G protein-coupled receptor E1 (Adgre1) from Mus musculus (Mouse).